Consider the following 369-residue polypeptide: Molybdenum import ATP-binding protein ModC 1 (369 aa).

In terms of domain architecture, ABC transporter spans 10–240 (KGYIEVAFNG…PALASRSEAA (231 aa)). Position 42 to 49 (42 to 49 (GPPGCGKT)) interacts with ATP. In terms of domain architecture, Mop spans 297–367 (ASSILNVFRA…ELCGKLGDDG (71 aa)).

The protein belongs to the ABC transporter superfamily. Molybdate importer (TC 3.A.1.8) family. In terms of assembly, the complex is composed of two ATP-binding proteins (ModC), two transmembrane proteins (ModB) and a solute-binding protein (ModA).

The protein localises to the cell inner membrane. It catalyses the reaction molybdate(out) + ATP + H2O = molybdate(in) + ADP + phosphate + H(+). Functionally, part of the ABC transporter complex ModABC involved in molybdenum import. Responsible for energy coupling to the transport system. The chain is Molybdenum import ATP-binding protein ModC 1 from Bradyrhizobium diazoefficiens (strain JCM 10833 / BCRC 13528 / IAM 13628 / NBRC 14792 / USDA 110).